Here is a 194-residue protein sequence, read N- to C-terminus: Type II restriction enzyme OkrAI (194 aa).

E71, D86, and W100 together coordinate Mg(2+). E101 serves as the catalytic Proton acceptor.

As to quaternary structure, homodimer. Mg(2+) serves as cofactor.

It catalyses the reaction Endonucleolytic cleavage of DNA to give specific double-stranded fragments with terminal 5'-phosphates.. Its function is as follows. A P subtype restriction enzyme that recognizes the double-stranded sequence 5'-GGATCC-3' and cleaves after G-1. The polypeptide is Type II restriction enzyme OkrAI (Oceanobacter kriegii (Oceanospirillum kriegii)).